A 254-amino-acid chain; its full sequence is uncharacterized protein (254 aa).

The 68-residue stretch at 14–81 (IRLQKVLSQA…DSLVYLALNK (68 aa)) folds into the S4 RNA-binding domain. Aspartate 119 functions as the Nucleophile in the catalytic mechanism.

The protein belongs to the pseudouridine synthase RsuA family.

The enzyme catalyses a uridine in RNA = a pseudouridine in RNA. This is an uncharacterized protein from Mycobacterium bovis (strain ATCC BAA-935 / AF2122/97).